Consider the following 150-residue polypeptide: Arginine repressor (150 aa).

The protein belongs to the ArgR family.

It localises to the cytoplasm. Its pathway is amino-acid biosynthesis; L-arginine biosynthesis [regulation]. Functionally, regulates arginine biosynthesis genes. The protein is Arginine repressor of Finegoldia magna (strain ATCC 29328 / DSM 20472 / WAL 2508) (Peptostreptococcus magnus).